The chain runs to 228 residues: L-ornithine N5-acetyltransferase NATA1 (228 aa).

A disordered region spans residues 1–21 (MAPPTAAPEPNTVPETSPTGH). One can recognise an N-acetyltransferase domain in the interval 77–227 (VFLLEISPSP…DALQAIDKLN (151 aa)). Acetyl-CoA-binding positions include 153–155 (IFM), 161–166 (RKGFGK), 192–195 (NVNA), and Y199.

It belongs to the acetyltransferase family.

Its function is as follows. Acetyltransferase that converts ornithine to N5-acetylornithine, which is likely used in plant defense. This is L-ornithine N5-acetyltransferase NATA1 (NATA1) from Arabidopsis thaliana (Mouse-ear cress).